Here is a 463-residue protein sequence, read N- to C-terminus: Glutamate--tRNA ligase 1 (463 aa).

The short motif at 10–20 (PSPTGYLHIGG) is the 'HIGH' region element. A 'KMSKS' region motif is present at residues 238–242 (KLSKR). Lysine 241 is a binding site for ATP.

Belongs to the class-I aminoacyl-tRNA synthetase family. Glutamate--tRNA ligase type 1 subfamily. In terms of assembly, monomer.

The protein localises to the cytoplasm. It carries out the reaction tRNA(Glu) + L-glutamate + ATP = L-glutamyl-tRNA(Glu) + AMP + diphosphate. In terms of biological role, catalyzes the attachment of glutamate to tRNA(Glu) in a two-step reaction: glutamate is first activated by ATP to form Glu-AMP and then transferred to the acceptor end of tRNA(Glu). The chain is Glutamate--tRNA ligase 1 from Helicobacter pylori (strain Shi470).